We begin with the raw amino-acid sequence, 676 residues long: MAEFRVRVSTGEAFGAGTWDKVSVSIVGTRGESPPLPLDNLGKEFTAGAEEDFQVTLPEDVGRVLLLRVHKAPPVLPLLGPLAPDAWFCRWFQLTPPRGGHLLFPCYQWLEGAGTLVLQEGTAKVSWADHHPVLQQQRQEELQARQEMYQWKAYNPGWPHCLDEKTVEDLELNIKYSTAKNANFYLQAGSAFAEMKIKGLLDRKGLWRSLNEMKRIFNFRRTPAAEHAFEHWQEDAFFASQFLNGLNPVLIRRCHYLPKNFPVTDAMVASVLGPGTSLQAELEKGSLFLVDHGILSGIQTNVINGKPQFSAAPMTLLYQSPGCGPLLPLAIQLSQTPGPNSPIFLPTDDKWDWLLAKTWVRNAEFSFHEALTHLLHSHLLPEVFTLATLRQLPHCHPLFKLLIPHTRYTLHINTLARELLIVPGQVVDRSTGIGIEGFSELIQRNMKQLNYSLLCLPEDIRTRGVEDIPGYYYRDDGMQIWGAVERFVSEIIGIYYPSDESVQDDRELQAWVREIFSKGFLNQESSGIPSSLETREALVQYVTMVIFTCSAKHAAVSAGQFDSCAWMPNLPPSMQLPPPTSKGLATCEGFIATLPPVNATCDVILALWLLSKEPGDQRPLGTYPDEHFTEEAPRRSIATFQSRLAQISRGIQERNQGLVLPYTYLDPPLIENSVSI.

The 123-residue stretch at 2 to 124 folds into the PLAT domain; the sequence is AEFRVRVSTG…TLVLQEGTAK (123 aa). Gly-15, Gly-17, Asp-39, Asn-40, Gly-42, Glu-44, Asp-85, and Ala-86 together coordinate Ca(2+). The Lipoxygenase domain occupies 125 to 676; it reads VSWADHHPVL…PPLIENSVSI (552 aa). 4 residues coordinate Fe cation: His-373, His-378, His-553, and Ile-676.

The protein belongs to the lipoxygenase family. Fe cation is required as a cofactor. In terms of tissue distribution, expressed in hair, prostate, lung, ovary, lymph node, spinal cord and cornea.

The protein resides in the nucleus. It localises to the cytoplasm. It is found in the cytosol. Its subcellular location is the cell membrane. The protein localises to the cytoskeleton. The protein resides in the membrane. It localises to the cell junction. It is found in the adherens junction. Its subcellular location is the focal adhesion. It carries out the reaction (5Z,8Z,11Z,14Z)-eicosatetraenoate + O2 = (15S)-hydroperoxy-(5Z,8Z,11Z,13E)-eicosatetraenoate. The enzyme catalyses (9Z,12Z)-octadecadienoate + O2 = 13-hydroperoxy-(9Z,11E)-octadecadienoate. It catalyses the reaction (5S)-hydroxy-(6E,8Z,11Z,14Z)-eicosatetraenoate + O2 = (5S)-hydroxy-(15S)-hydroperoxy-(6E,8Z,11Z,13E)-eicosatetraenoate. The catalysed reaction is (5Z,8Z,11Z,14Z)-eicosatetraenoate + O2 = 5-hydroperoxy-(6E,8Z,11Z,14Z)-eicosatetraenoate. It carries out the reaction (5S,6R)-dihydroxy-(7E,9E,11Z,14Z)-eicosatetraenoate + O2 = (5S,6R)-dihydroxy-(15S)-hydroperoxy-(7E,9E,11Z,13E)-eicosatetraenoate. The enzyme catalyses (5S)-hydroperoxy-(6E,8Z,11Z,14Z)-eicosatetraenoate + O2 = (5S,15S)-dihydroperoxy-(6E,8Z,11Z,13E)-eicosatetraenoate. It catalyses the reaction 2-(5Z,8Z,11Z,14Z-eicosatetraenoyl)-glycerol + O2 = 2-[15(S)-hydroperoxy-(5Z,8Z,11Z,13E)-eicosatetraenoyl]-glycerol. The catalysed reaction is (8S)-hydroperoxy-(5Z,9E,11Z,14Z)-eicosatetraenoate + O2 = (8S,15S)-dihydroperoxy-(5Z,9E,11Z,13E)-eicosatetraenoate. It carries out the reaction N-(5Z,8Z,11Z,14Z)-eicosatetraenoyl-L-alanine + O2 = N-(15S)-hydroperoxy-(5Z,8Z,11Z,13E)-eicosatetraenoyl-alanine. The enzyme catalyses N-(5Z,8Z,11Z,14Z)-eicosatetraenoyl-gamma-aminobutanoate + O2 = N-(15S)-hydroperoxy-(5Z,8Z,11Z,13E)-eicosatetraenoyl-gamma-aminobutanoate. It catalyses the reaction N-(5Z,8Z,11Z,14Z)-eicosatetraenoyl-glycine + O2 = N-(15S)-hydroperoxy-(5Z,8Z,11Z,13E)-eicosatetraenoyl-glycine. The catalysed reaction is N-(5Z,8Z,11Z,14Z)-eicosatetraenoyl-taurine + O2 = N-(15S)-hydroperoxy-(5Z,8Z,11Z,13E)-eicosatetraenoyl-taurine. It carries out the reaction 2-(5Z,8Z,11Z,14Z-eicosatetraenoyl)-glycerol + O2 = 2-[12-hydroperoxy-(5Z,8Z,10E,14Z)-eicosatetraenoyl]-glycerol. The enzyme catalyses 1-octadecanoyl-2-(5Z,8Z,11Z,14Z-eicosatetraenoyl)-sn-glycero-3-phosphocholine + O2 = 1-octadecanoyl-2-(15-hydroperoxy-5Z,8Z,11Z,13E-eicosatetraenoyl)-sn-glycero-3-phosphocholine. It catalyses the reaction a 1-acyl-2-(5Z,8Z,11Z,14Z-eicosatetraenoyl)-sn-glycero-3-phospho-(1D-myo-inositol) + O2 = a 1-acyl-2-(15-hydroperoxy-5Z,8Z,11Z,13E-eicosatetraenoyl)-sn-glycero-3-phospho-(1D-myo-inositol). The catalysed reaction is a 1-acyl-2-(8Z,11Z,14Z-eicosatrienoyl)-sn-glycero-3-phospho-(1D-myo-inositol) + O2 = a 1-acyl-2-(15-hydroperoxy-8Z,11Z,13E-eicosatrienoyl)-sn-glycero-3-phospho-(1D-myo-inositol). It carries out the reaction 1-octadecanoyl-2-(5Z,8Z,11Z,14Z)-eicosatetraenoyl-sn-glycero-3-phosphoethanolamine + O2 = 1-octadecanoyl-2-(15-hydroperoxy-5Z,8Z,11Z,13E-eicosatetraenoyl)-sn-glycero-3-phosphoethanolamine. The enzyme catalyses 1-octadecanoyl-2-(5Z,8Z,11Z,14Z-eicosatetraenoyl)-sn-glycero-3-phospho-(1D-myo-inositol) + O2 = 1-octadecanoyl-2-(15-hydroperoxy-5Z,8Z,11Z,13E-eicosatetraenoyl)-sn-glycero-3-phospho-(1D-myo-inositol). It catalyses the reaction (8Z,11Z,14Z)-eicosatrienoate + O2 = 15-hydroperoxy-(8Z,11Z,13E)-eicosatrienoate. The catalysed reaction is (7S)-hydroperoxy-(4Z,8E,10Z,13Z,16Z,19Z)-docosahexaenoate + O2 = (7S,17S)-dihydroperoxy-(4Z,8E,10Z,13Z,15E,19Z)-docosahexaenoate. It carries out the reaction (5Z,8Z,11Z,14Z)-eicosatetraenoate + O2 = 15-hydroperoxy-(5Z,8Z,11Z,13E)-eicosatetraenoate. The protein operates within lipid metabolism; hydroperoxy eicosatetraenoic acid biosynthesis. Non-heme iron-containing dioxygenase that catalyzes the stereo-specific peroxidation of free and esterified polyunsaturated fatty acids (PUFAs) generating a spectrum of bioactive lipid mediators. It inserts peroxyl groups at C15 of arachidonate ((5Z,8Z,11Z,14Z)-eicosatetraenoate) producing (15S)-hydroperoxyeicosatetraenoate/(15S)-HPETE. Also peroxidizes linoleate ((9Z,12Z)-octadecadienoate) to 13-hydroperoxyoctadecadienoate/13-HPODE. Oxygenates arachidonyl derivatives such as 2-arachidonoylglycerol (2-AG) leading to the production and extracellular release of 15-hydroxyeicosatetraenoyl glycerol (15-HETE-G) that acts as a peroxisome proliferator-activated receptor alpha agonist. Has the ability to efficiently class-switch ALOX5 pro-inflammatory mediators into anti-inflammatory intermediates. Participates in the sequential oxidations of DHA ((4Z,7Z,10Z,13Z,16Z,19Z)-docosahexaenoate) to generate specialized pro-resolving mediators (SPMs) resolvin D5 ((7S,17S)-diHPDHA), which can actively down-regulate the immune response and have anti-aggregation properties with platelets. In addition to free PUFAs hydrolyzed from phospholipids, it directly oxidizes PUFAs esterified to membrane-bound phospholipids. Has no detectable 8S-lipoxygenase activity on arachidonate but reacts with (8S)-HPETE to produce (8S,15S)-diHPETE. May regulate progression through the cell cycle and cell proliferation. May also regulate cytokine secretion by macrophages and therefore play a role in the immune response. May also regulate macrophage differentiation into proatherogenic foam cells. In terms of biological role, does not convert arachidonic acid to 15S-hydroperoxyeicosatetraenoic acid/(15S)-HPETE. The protein is Polyunsaturated fatty acid lipoxygenase ALOX15B of Homo sapiens (Human).